The primary structure comprises 427 residues: Tryptophan synthase beta chain (427 aa).

N6-(pyridoxal phosphate)lysine is present on K100.

It belongs to the TrpB family. Tetramer of two alpha and two beta chains. It depends on pyridoxal 5'-phosphate as a cofactor.

It catalyses the reaction (1S,2R)-1-C-(indol-3-yl)glycerol 3-phosphate + L-serine = D-glyceraldehyde 3-phosphate + L-tryptophan + H2O. Its pathway is amino-acid biosynthesis; L-tryptophan biosynthesis; L-tryptophan from chorismate: step 5/5. In terms of biological role, the beta subunit is responsible for the synthesis of L-tryptophan from indole and L-serine. The protein is Tryptophan synthase beta chain (trpB) of Streptomyces coelicolor (strain ATCC BAA-471 / A3(2) / M145).